Consider the following 672-residue polypeptide: SHC SH2 domain-binding protein 1 (672 aa).

Alanine 2 is modified (N-acetylalanine). Serine 5 bears the Phosphoserine mark. Threonine 7 is subject to Phosphothreonine. Residues serine 31, serine 42, serine 44, serine 47, and serine 273 each carry the phosphoserine modification. PbH1 repeat units lie at residues 428–451 (GADI…LIVH), 452–473 (RGKT…TVRT), 474–496 (SAEF…EIYP), 497–518 (GSQC…LIKD), and 526–548 (IPKI…VLVK). Serine 634 carries the phosphoserine modification.

As to quaternary structure, interacts directly with isoform p52shc of SHC1 via its SH2 domain. Interacts with TRIM71; leading to enhanced SHCBP1 protein stability. Interacts with both members of the centralspindlin complex, KIF23 and RACGAP1.

It localises to the midbody. The protein localises to the cytoplasm. The protein resides in the cytoskeleton. Its subcellular location is the spindle. In terms of biological role, may play a role in signaling pathways governing cellular proliferation, cell growth and differentiation. May be a component of a novel signaling pathway downstream of Shc. Acts as a positive regulator of FGF signaling in neural progenitor cells. The protein is SHC SH2 domain-binding protein 1 (SHCBP1) of Homo sapiens (Human).